Here is a 352-residue protein sequence, read N- to C-terminus: 4-hydroxy-2-oxovalerate aldolase 5 (352 aa).

The Pyruvate carboxyltransferase domain maps to 9–261 (IRVTDSSLRD…RTGIDTLKII (253 aa)). Substrate is bound at residue 17–18 (RD). Position 18 (D18) interacts with Mn(2+). Catalysis depends on H21, which acts as the Proton acceptor. S171 and H200 together coordinate substrate. Residues H200 and H202 each contribute to the Mn(2+) site. Y291 serves as a coordination point for substrate.

Belongs to the 4-hydroxy-2-oxovalerate aldolase family.

It catalyses the reaction (S)-4-hydroxy-2-oxopentanoate = acetaldehyde + pyruvate. In Rhodococcus opacus (strain B4), this protein is 4-hydroxy-2-oxovalerate aldolase 5.